Reading from the N-terminus, the 908-residue chain is Glutamate receptor ionotropic, kainate 2 (908 aa).

The first 31 residues, Met-1–Gly-31, serve as a signal peptide directing secretion. At Thr-32–Pro-561 the chain is on the extracellular side. N-linked (GlcNAc...) asparagine glycosylation is found at Asn-67, Asn-73, Asn-275, Asn-378, Asn-412, Asn-423, and Asn-430. A disulfide bridge links Cys-96 with Cys-347. Residues Pro-516, Ala-518, and Arg-523 each coordinate L-glutamate. Asn-546 carries an N-linked (GlcNAc...) asparagine glycan. A helical membrane pass occupies residues Asp-562 to Ala-582. Over Arg-583–Gly-638 the chain is Cytoplasmic. The chain crosses the membrane as a helical span at residues Ile-639–Leu-659. Residues Thr-660–Asn-819 lie on the Extracellular side of the membrane. The L-glutamate site is built by Ala-689, Thr-690, and Glu-738. Cysteines 750 and 804 form a disulfide. A glycan (N-linked (GlcNAc...) asparagine) is linked at Asn-751. The chain crosses the membrane as a helical span at residues Ile-820–Gly-840. The Cytoplasmic segment spans residues Glu-841–Ala-908. Phosphoserine; by PKC occurs at positions 846 and 868. Lys-886 is covalently cross-linked (Glycyl lysine isopeptide (Lys-Gly) (interchain with G-Cter in SUMO1)).

The protein belongs to the glutamate-gated ion channel (TC 1.A.10.1) family. GRIK2 subfamily. In terms of assembly, homotetramer and heterotetramer with GRIK5. Tetramers may be formed by the dimerization of dimers. Assembles into a kainate-gated homomeric channel that does not bind AMPA. Can form functional heteromeric receptors with GRIK3, GRIK4 and GRIK5. Interacts with NETO2. Interacts with DLG4. Interacts with NETO2. Interacts (via C-terminus) with KLHL17 (via kelch repeats); the interaction targets GRIK2 for degradation via ubiquitin-proteasome pathway. Sumoylation mediates kainate receptor-mediated endocytosis and regulates synaptic transmission. Sumoylation is enhanced by PIAS3 and desumoylated by SENP1. In terms of processing, ubiquitinated. Ubiquitination regulates the GRIK2 levels at the synapse by leading kainate receptor degradation through proteasome. Post-translationally, phosphorylated by PKC at Ser-868 upon agonist activation, this directly enhance sumoylation.

It is found in the cell membrane. The protein localises to the postsynaptic cell membrane. The catalysed reaction is Ca(2+)(in) = Ca(2+)(out). It catalyses the reaction Na(+)(in) = Na(+)(out). With respect to regulation, cold receptor activity activated by temperatures between 10-19 degrees Celsius. In terms of biological role, ionotropic glutamate receptor that functions as a cation-permeable ligand-gated ion channel, gated by L-glutamate and the glutamatergic agonist kainic acid. L-glutamate acts as an excitatory neurotransmitter at many synapses in the central nervous system. Binding of the excitatory neurotransmitter L-glutamate induces a conformation change, leading to the opening of the cation channel, and thereby converts the chemical signal to an electrical impulse. The receptor then desensitizes rapidly and enters a transient inactive state, characterized by the presence of bound agonist. Modulates cell surface expression of NETO2. In association with GRIK3, involved in presynaptic facilitation of glutamate release at hippocampal mossy fiber synapses. Its function is as follows. Independent of its ionotropic glutamate receptor activity, acts as a thermoreceptor conferring sensitivity to cold temperatures. Functions in dorsal root ganglion neurons. This is Glutamate receptor ionotropic, kainate 2 (GRIK2) from Macaca fascicularis (Crab-eating macaque).